The following is a 101-amino-acid chain: NADH-quinone oxidoreductase subunit K (101 aa).

The next 3 membrane-spanning stretches (helical) occupy residues 2 to 22 (ISLNHYLIVAALMFVIGLVGV), 29 to 49 (IMLFFSTEILLNAANVALVAI), and 63 to 83 (MFIIAIAASEMAVGLGLLILW).

It belongs to the complex I subunit 4L family. In terms of assembly, NDH-1 is composed of 14 different subunits. Subunits NuoA, H, J, K, L, M, N constitute the membrane sector of the complex.

It localises to the cell inner membrane. It catalyses the reaction a quinone + NADH + 5 H(+)(in) = a quinol + NAD(+) + 4 H(+)(out). NDH-1 shuttles electrons from NADH, via FMN and iron-sulfur (Fe-S) centers, to quinones in the respiratory chain. The immediate electron acceptor for the enzyme in this species is believed to be ubiquinone. Couples the redox reaction to proton translocation (for every two electrons transferred, four hydrogen ions are translocated across the cytoplasmic membrane), and thus conserves the redox energy in a proton gradient. This chain is NADH-quinone oxidoreductase subunit K, found in Campylobacter hominis (strain ATCC BAA-381 / DSM 21671 / CCUG 45161 / LMG 19568 / NCTC 13146 / CH001A).